A 413-amino-acid chain; its full sequence is 2,3-bisphosphoglycerate-independent phosphoglycerate mutase (413 aa).

Belongs to the BPG-independent phosphoglycerate mutase family. A-PGAM subfamily.

The enzyme catalyses (2R)-2-phosphoglycerate = (2R)-3-phosphoglycerate. It functions in the pathway carbohydrate degradation; glycolysis; pyruvate from D-glyceraldehyde 3-phosphate: step 3/5. Catalyzes the interconversion of 2-phosphoglycerate and 3-phosphoglycerate. In Metallosphaera sedula (strain ATCC 51363 / DSM 5348 / JCM 9185 / NBRC 15509 / TH2), this protein is 2,3-bisphosphoglycerate-independent phosphoglycerate mutase.